Here is a 295-residue protein sequence, read N- to C-terminus: Ribosomal protein L11 methyltransferase (295 aa).

S-adenosyl-L-methionine contacts are provided by T150, G171, D193, and N232.

This sequence belongs to the methyltransferase superfamily. PrmA family.

Its subcellular location is the cytoplasm. It catalyses the reaction L-lysyl-[protein] + 3 S-adenosyl-L-methionine = N(6),N(6),N(6)-trimethyl-L-lysyl-[protein] + 3 S-adenosyl-L-homocysteine + 3 H(+). Methylates ribosomal protein L11. In Neisseria meningitidis serogroup A / serotype 4A (strain DSM 15465 / Z2491), this protein is Ribosomal protein L11 methyltransferase.